The sequence spans 140 residues: ATP synthase epsilon chain (140 aa).

The protein belongs to the ATPase epsilon chain family. F-type ATPases have 2 components, CF(1) - the catalytic core - and CF(0) - the membrane proton channel. CF(1) has five subunits: alpha(3), beta(3), gamma(1), delta(1), epsilon(1). CF(0) has three main subunits: a, b and c.

It is found in the cell inner membrane. Produces ATP from ADP in the presence of a proton gradient across the membrane. The protein is ATP synthase epsilon chain of Vibrio vulnificus (strain CMCP6).